The chain runs to 257 residues: Succinate dehydrogenase subunit 5, mitochondrial (257 aa).

The N-terminal 89 residues, 1 to 89 (MGTLGRAIHT…AMGMGQVRRF (89 aa)), are a transit peptide targeting the mitochondrion.

As to quaternary structure, component of complex II composed of eight subunits in plants: four classical SDH subunits SDH1, SDH2, SDH3 and SDH4 (a flavoprotein (FP), an iron-sulfur protein (IP), and a cytochrome b composed of a large and a small subunit.), as well as four subunits unknown in mitochondria from bacteria and heterotrophic eukaryotes.

The protein localises to the mitochondrion inner membrane. The protein operates within carbohydrate metabolism; tricarboxylic acid cycle. This Arabidopsis thaliana (Mouse-ear cress) protein is Succinate dehydrogenase subunit 5, mitochondrial.